We begin with the raw amino-acid sequence, 103 residues long: SLC35A4 upstream open reading frame protein (103 aa).

Residues 62–84 (ASAVLGFAVGTCTGIYAAQAYAV) traverse the membrane as a helical segment.

The protein localises to the mitochondrion inner membrane. In terms of biological role, required to maintain cellular respiration. This chain is SLC35A4 upstream open reading frame protein, found in Homo sapiens (Human).